An 871-amino-acid polypeptide reads, in one-letter code: MAAKKSQKVTPLMQQYNSIKLKYPDAMLLFRVGDFYETFGEDAVKAARILNIVLTNRNNGGERTELAGFPHHSLNTYLPKLVKAGQRVAICDQLEDPKMTKTIVKRGVTELVTPGVAMNDDILNSKSNNFLCAVHFGKKNLGVSFLDVSTGEFLCAQGNTEYIDKLLQNFGPSEILVQKKFKKEFNESFGKDKHCFYLDDWIFKIDYSEETLNAHFQTKSLKGFGIDHLEEGIIASGAVLYYLAETRHHRLQHINSINRIAEEQYVWMDRFTIRNLELYHSTAANAVTLLDVIDKTISPMGGRLLKRWLALPLKDAEMIEKRLQVVDFLIKNPEILANIQDQIREISDLERLISKVATQKISPREVNQLKNSLNAIIPVKELALKCNNEALKIIGDNLHSCDLLREKISESISEDAPVLIQRGGVIASGFSSELDELRGLAFSGKDYLDKMIQRETEKTGISSLKIGSNNVYGYYIEVRNTHKDKVPEEWTRKQTLVNAERYITEELKEYESKILGAEEKILHLEQELFGKLIAWMAEYIDPVQQNARLIARLDCLCSFAQQAQAENYSKPEITDSYGMDIEEGRHPVIEKQLPPGEVYVTNNLHLDREEQQIIMITGPNMSGKSAILRQTALIVLMAQMGSFVPARSAEIGLVDKIFTRVGASDNISMGESTFMVEMNETASILNNISDRSLVLLDEIGRGTSTYDGISIAWAISEYLHEHPAKPKTLFATHYHELNEMCETFERIKNFNVSVKELKDNVLFLRKLVPGGSEHSFGIHVAKMAGMPQMVLHRANKILAKLEASHSMEDSGAVLKKSAEDEMQLSFFNLDDPLLEDLKQELLGIDIDTLTPVEALMKLNEIKRMLGNNKQQ.

Position 618–625 (618–625) interacts with ATP; the sequence is GPNMSGKS.

The protein belongs to the DNA mismatch repair MutS family.

Its function is as follows. This protein is involved in the repair of mismatches in DNA. It is possible that it carries out the mismatch recognition step. This protein has a weak ATPase activity. The protein is DNA mismatch repair protein MutS of Christiangramia forsetii (strain DSM 17595 / CGMCC 1.15422 / KT0803) (Gramella forsetii).